Reading from the N-terminus, the 58-residue chain is UPF0434 protein Sfri_2386 (58 aa).

The protein belongs to the UPF0434 family.

This Shewanella frigidimarina (strain NCIMB 400) protein is UPF0434 protein Sfri_2386.